The primary structure comprises 471 residues: 3-isopropylmalate dehydratase large subunit (471 aa).

Cysteine 347, cysteine 409, and cysteine 412 together coordinate [4Fe-4S] cluster.

This sequence belongs to the aconitase/IPM isomerase family. LeuC type 1 subfamily. Heterodimer of LeuC and LeuD. Requires [4Fe-4S] cluster as cofactor.

It carries out the reaction (2R,3S)-3-isopropylmalate = (2S)-2-isopropylmalate. Its pathway is amino-acid biosynthesis; L-leucine biosynthesis; L-leucine from 3-methyl-2-oxobutanoate: step 2/4. Functionally, catalyzes the isomerization between 2-isopropylmalate and 3-isopropylmalate, via the formation of 2-isopropylmaleate. The protein is 3-isopropylmalate dehydratase large subunit of Buchnera aphidicola subsp. Rhopalosiphum padi.